The chain runs to 884 residues: Translation initiation factor IF-2 (884 aa).

Residues 93–288 are disordered; it reads VNTPEAEQAK…KGKRKPSTLQ (196 aa). Basic and acidic residues predominate over residues 99–209; the sequence is EQAKAEEQAQ…KMAAENEGKW (111 aa). Over residues 216 to 229 the composition is skewed to polar residues; it reads QTESADYHVTTSQH. Positions 231–246 are enriched in basic and acidic residues; sequence RAAEDENDAKVEGDRR. A compositionally biased stretch (basic residues) spans 247–261; sequence SRTRGGKATKQKKGN. Positions 262–275 are enriched in basic and acidic residues; that stretch reads KLSESKADREEARA. Residues 383–552 form the tr-type G domain; sequence HRAPVVTIMG…LLQAEVLELK (170 aa). Positions 392–399 are G1; sequence GHVDHGKT. 392 to 399 lines the GTP pocket; sequence GHVDHGKT. Residues 417–421 are G2; that stretch reads GITQH. Residues 438-441 are G3; it reads DTPG. GTP is bound by residues 438–442 and 492–495; these read DTPGH and NKID. Residues 492–495 form a G4 region; it reads NKID. A G5 region spans residues 528–530; that stretch reads SAK.

Belongs to the TRAFAC class translation factor GTPase superfamily. Classic translation factor GTPase family. IF-2 subfamily.

Its subcellular location is the cytoplasm. Its function is as follows. One of the essential components for the initiation of protein synthesis. Protects formylmethionyl-tRNA from spontaneous hydrolysis and promotes its binding to the 30S ribosomal subunits. Also involved in the hydrolysis of GTP during the formation of the 70S ribosomal complex. The protein is Translation initiation factor IF-2 of Yersinia pestis bv. Antiqua (strain Antiqua).